The sequence spans 470 residues: Zinc finger protein weckle (470 aa).

The tract at residues 1-103 (MGVPTSDWIY…DALRLEYGLP (103 aa)) is required for homodimerization. The region spanning 10-82 (YWCRLCARDD…SKVQAIFELL (73 aa)) is the ZAD domain. Residues Cys-12, Cys-15, Cys-55, and Cys-58 each coordinate Zn(2+). Residues 156-265 (NSDPKVLASP…LSMSPHGSQS (110 aa)) are disordered. Ser-168 is subject to Phosphoserine. A compositionally biased stretch (acidic residues) spans 195-208 (ESDDEEAILDEDEA). The span at 214-225 (LKRKRGRPKGSG) shows a compositional bias: basic residues. Positions 237-254 (TSREPDDNAKSKQDDKTS) are enriched in basic and acidic residues. A compositionally biased stretch (polar residues) spans 255–265 (ELSMSPHGSQS). C2H2-type zinc fingers lie at residues 271-294 (YPCK…HDMH), 300-322 (YVCD…QLVH), 328-350 (CICP…SQTH), 355-377 (FECN…KYVH), 383-405 (FKCE…LLGH), and 411-434 (YVCK…WKKH).

Homodimer. Interacts with Myd88 and Toll.

Its subcellular location is the cell membrane. Its function is as follows. Acts as an adapter to assemble/stabilize a Toll/wek/Myd88/tube complex; required for efficient recruitment of Myd88 to Toll. Dispensable for innate immune response; plays a minimal role, if any, in the immune defense against Gram-positive bacteria and fungi. Involved in dorsoventral axis determination. This is Zinc finger protein weckle from Drosophila melanogaster (Fruit fly).